Consider the following 60-residue polypeptide: Small ribosomal subunit protein bS21 (60 aa).

The interval 35-60 (REHYEKPSVKRKKKSEAARRRKSKVR) is disordered. A compositionally biased stretch (basic residues) spans 43–60 (VKRKKKSEAARRRKSKVR).

The protein belongs to the bacterial ribosomal protein bS21 family.

The chain is Small ribosomal subunit protein bS21 from Clostridium novyi (strain NT).